A 531-amino-acid chain; its full sequence is DNA damage-binding protein cmr1 (531 aa).

Disordered stretches follow at residues G37 to A83 and D218 to H264. The span at K53 to K64 shows a compositional bias: basic residues. The stretch at V186 to S227 is one WD 1 repeat. The span at G233 to D245 shows a compositional bias: acidic residues. WD repeat units lie at residues P253–T293, S300–V340, L345–P385, L392–E431, G454–L497, and D500–M531.

The protein belongs to the WD repeat DDB2/WDR76 family.

Its function is as follows. DNA-binding protein that binds to both single- and double-stranded DNA. Binds preferentially to UV-damaged DNA. May be involved in DNA-metabolic processes. This chain is DNA damage-binding protein cmr1, found in Aspergillus clavatus (strain ATCC 1007 / CBS 513.65 / DSM 816 / NCTC 3887 / NRRL 1 / QM 1276 / 107).